Consider the following 88-residue polypeptide: Putative membrane protein insertion efficiency factor (88 aa).

The interval 68-88 is disordered; that stretch reads VPPPNSDTRARGEADARSHRL. Basic and acidic residues predominate over residues 75 to 88; that stretch reads TRARGEADARSHRL.

It belongs to the UPF0161 family.

The protein localises to the cell inner membrane. Its function is as follows. Could be involved in insertion of integral membrane proteins into the membrane. The chain is Putative membrane protein insertion efficiency factor from Burkholderia cenocepacia (strain ATCC BAA-245 / DSM 16553 / LMG 16656 / NCTC 13227 / J2315 / CF5610) (Burkholderia cepacia (strain J2315)).